A 372-amino-acid polypeptide reads, in one-letter code: AA9 family lytic polysaccharide monooxygenase C (372 aa).

Residues 1–16 form the signal peptide; that stretch reads MFRSALFLLLAPLALS. Residues H17 and H99 each coordinate Cu(2+). C59 and C189 are disulfide-bonded. O2-binding residues include H174 and Q184. Y186 contributes to the Cu(2+) binding site.

It belongs to the polysaccharide monooxygenase AA9 family. The cofactor is Cu(2+).

It localises to the secreted. It catalyses the reaction [(1-&gt;4)-beta-D-glucosyl]n+m + reduced acceptor + O2 = 4-dehydro-beta-D-glucosyl-[(1-&gt;4)-beta-D-glucosyl]n-1 + [(1-&gt;4)-beta-D-glucosyl]m + acceptor + H2O.. Its function is as follows. Lytic polysaccharide monooxygenase (LPMO) that depolymerizes crystalline and amorphous polysaccharides via the oxidation of scissile alpha- or beta-(1-4)-glycosidic bonds, yielding C1 or C4 oxidation products. Catalysis by LPMOs requires the reduction of the active-site copper from Cu(II) to Cu(I) by a reducing agent and H(2)O(2) or O(2) as a cosubstrate. The sequence is that of AA9 family lytic polysaccharide monooxygenase C from Aspergillus tamarii.